Consider the following 194-residue polypeptide: dTTP/UTP pyrophosphatase (194 aa).

Residue aspartate 73 is the Proton acceptor of the active site.

It belongs to the Maf family. YhdE subfamily. A divalent metal cation serves as cofactor.

Its subcellular location is the cytoplasm. The enzyme catalyses dTTP + H2O = dTMP + diphosphate + H(+). It carries out the reaction UTP + H2O = UMP + diphosphate + H(+). Functionally, nucleoside triphosphate pyrophosphatase that hydrolyzes dTTP and UTP. May have a dual role in cell division arrest and in preventing the incorporation of modified nucleotides into cellular nucleic acids. This chain is dTTP/UTP pyrophosphatase, found in Clostridium botulinum (strain Loch Maree / Type A3).